Reading from the N-terminus, the 327-residue chain is Gamma-resorcylate decarboxylase (327 aa).

Residues Glu8, His10, His164, and Asp287 each coordinate Zn(2+). Residue Asp287 is part of the active site.

The protein belongs to the metallo-dependent hydrolases superfamily. ACMSD family. As to quaternary structure, homotetramer. Requires Zn(2+) as cofactor.

The enzyme catalyses 2,6-dihydroxybenzoate + H(+) = resorcinol + CO2. It carries out the reaction 2,3-dihydroxybenzoate + H(+) = catechol + CO2. It functions in the pathway aromatic compound metabolism. With respect to regulation, insensitive to oxygen. Decarboxylation and carboxylation are inhibited by AgNO(3) and by diethyl pyrocarbonate, a histidine residue-specific inhibitor. Decarboxylation is also inhibited by HgCl(2) and activated by MgCl(2). In terms of biological role, involved in the gamma-resorcylate (2,6-dihydroxybenzoate) catabolism. Catalyzes the reversible decarboxylation of gamma-resorcylate to resorcinol. Also catalyzes the decarboxylation of 2,3-dihydroxybenzoate to catechol, but does not act on 2-hydroxybenzoic acid 3-hydroxybenzoic acid, 4-hydroxybenzoic acid, 3,4-dihydroxybenzoic acid, 2,5-dihydroxybenzoic acid, 2,3,4-trihydroxybenzoic acid, 3,4,5-trihydroxybenzoic acid, 4-aminobenzoic acid, o-hydroxyphenylacetic acid and vanillic acid. Resorcinol and catechol can both be carboxylated by the reverse reaction. This chain is Gamma-resorcylate decarboxylase, found in Rhizobium radiobacter (Agrobacterium tumefaciens).